Here is a 447-residue protein sequence, read N- to C-terminus: Cytochrome P450 BJ-4 (447 aa).

A heme-binding site is contributed by Cys-392.

This sequence belongs to the cytochrome P450 family. Heme serves as cofactor.

Cytochromes P450 are a group of heme-thiolate monooxygenases. They oxidize a variety of structurally unrelated compounds, including steroids, fatty acids, and xenobiotics. The polypeptide is Cytochrome P450 BJ-4 (cyp117) (Bradyrhizobium diazoefficiens (strain JCM 10833 / BCRC 13528 / IAM 13628 / NBRC 14792 / USDA 110)).